A 722-amino-acid polypeptide reads, in one-letter code: Polyribonucleotide nucleotidyltransferase (722 aa).

Mg(2+) is bound by residues Asp495 and Asp501. A KH domain is found at 562 to 621 (PRLLSFRIDPELIGTVIGPGGRTIKGITERTNTKIDIEDGGIVTIASHDGAAAEEAQRII). Positions 631-699 (GEIFPGSITR…NRGRINLTLR (69 aa)) constitute an S1 motif domain. The interval 700–722 (GVSQNGGMSNYPEPTPTPVAPLT) is disordered. Residues 712–722 (EPTPTPVAPLT) show a composition bias toward pro residues.

This sequence belongs to the polyribonucleotide nucleotidyltransferase family. Mg(2+) is required as a cofactor.

It localises to the cytoplasm. It carries out the reaction RNA(n+1) + phosphate = RNA(n) + a ribonucleoside 5'-diphosphate. Its function is as follows. Involved in mRNA degradation. Catalyzes the phosphorolysis of single-stranded polyribonucleotides processively in the 3'- to 5'-direction. The protein is Polyribonucleotide nucleotidyltransferase of Prochlorococcus marinus (strain NATL1A).